We begin with the raw amino-acid sequence, 363 residues long: Peptide chain release factor 1 (363 aa).

Gln237 carries the N5-methylglutamine modification. Positions 287–299 are enriched in basic and acidic residues; it reads EQHKEQASTRKEL. The disordered stretch occupies residues 287–306; that stretch reads EQHKEQASTRKELIGSGDRS.

This sequence belongs to the prokaryotic/mitochondrial release factor family. In terms of processing, methylated by PrmC. Methylation increases the termination efficiency of RF1.

Its subcellular location is the cytoplasm. In terms of biological role, peptide chain release factor 1 directs the termination of translation in response to the peptide chain termination codons UAG and UAA. This is Peptide chain release factor 1 from Ruthia magnifica subsp. Calyptogena magnifica.